Here is a 455-residue protein sequence, read N- to C-terminus: MSGDILQTPDAPKPQGALDNYFKITARGSTVRQEVLAGLTTFLAMVYSVIVVPGMLGKAGFPPAAVFVATCLVAGFGSLLMGLWANLPMAIGCAISLTAFTAFSLVLGQQISVPVALGAVFLMGVIFTAISVTGVRTWILRNLPMGIAHGTGIGIGLFLLLIAANGVGMVIKNPIEGLPVALGAFTSFPVMMSLLGLAVIFGLEKCRVPGGILLVIIAISIIGLIFDPAVKYHGLVAMPSLTGEDGKSLIFSLDIMGALQPTVLPSVLALVMTAVFDATGTIRAVAGQANLLDKDNQIINGGKALTSDSVSSIFSGLVGAAPAAVYIESAAGTAAGGKTGLTATVVGALFLLILFLSPLSFLIPGYATAPALMYVGLLMLSNVSKLDFNDFIDAMAGLVCAVFIVLTCNIVTGIMLGFVTLVVGRVFAREWQKLNIGTVIITAALVAFYAGGWAI.

Topologically, residues 1 to 31 are cytoplasmic; sequence MSGDILQTPDAPKPQGALDNYFKITARGSTV. The chain crosses the membrane as a helical span at residues 32–55; that stretch reads RQEVLAGLTTFLAMVYSVIVVPGM. The Periplasmic portion of the chain corresponds to 56-65; sequence LGKAGFPPAA. The helical transmembrane segment at 66-84 threads the bilayer; that stretch reads VFVATCLVAGFGSLLMGLW. Topologically, residues 85-86 are cytoplasmic; that stretch reads AN. The discontinuously helical transmembrane segment at 87–103 threads the bilayer; the sequence is LPMAIGCAISLTAFTAF. The Periplasmic portion of the chain corresponds to 104–115; sequence SLVLGQQISVPV. The helical transmembrane segment at 116–135 threads the bilayer; that stretch reads ALGAVFLMGVIFTAISVTGV. Topologically, residues 136-147 are cytoplasmic; it reads RTWILRNLPMGI. Residues 148–168 form a helical membrane-spanning segment; that stretch reads AHGTGIGIGLFLLLIAANGVG. Residues 169–186 lie on the Periplasmic side of the membrane; it reads MVIKNPIEGLPVALGAFT. The chain crosses the membrane as a helical span at residues 187–204; sequence SFPVMMSLLGLAVIFGLE. Over 205–208 the chain is Cytoplasmic; that stretch reads KCRV. A helical transmembrane segment spans residues 209–228; that stretch reads PGGILLVIIAISIIGLIFDP. The Periplasmic segment spans residues 229 to 260; sequence AVKYHGLVAMPSLTGEDGKSLIFSLDIMGALQ. A helical membrane pass occupies residues 261–289; it reads PTVLPSVLALVMTAVFDATGTIRAVAGQA. The Cytoplasmic segment spans residues 290–302; the sequence is NLLDKDNQIINGG. A helical transmembrane segment spans residues 303 to 318; the sequence is KALTSDSVSSIFSGLV. Residues 319 to 320 are Periplasmic-facing; it reads GA. The discontinuously helical transmembrane segment at 321-336 threads the bilayer; the sequence is APAAVYIESAAGTAAG. At 337–340 the chain is on the cytoplasmic side; sequence GKTG. The chain crosses the membrane as a helical span at residues 341–355; sequence LTATVVGALFLLILF. Over 356-366 the chain is Periplasmic; that stretch reads LSPLSFLIPGY. The chain crosses the membrane as a helical span at residues 367–386; the sequence is ATAPALMYVGLLMLSNVSKL. Topologically, residues 387 to 391 are cytoplasmic; that stretch reads DFNDF. The segment at residues 392–427 is an intramembrane region (discontinuously helical); sequence IDAMAGLVCAVFIVLTCNIVTGIMLGFVTLVVGRVF. At 428–455 the chain is on the cytoplasmic side; the sequence is AREWQKLNIGTVIITAALVAFYAGGWAI.

Belongs to the nucleobase:cation symporter-2 (NCS2) (TC 2.A.40) family. Azg-like subfamily.

It is found in the cell membrane. Its function is as follows. High-affinity transporter for guanine and hypoxanthine. The chain is Guanine/hypoxanthine permease GhxQ (ghxQ) from Escherichia coli (strain K12).